Reading from the N-terminus, the 73-residue chain is U3-agatoxin-Ao1e (73 aa).

The first 20 residues, 1 to 20 (MRTIISLLLLSAMVFAVIEA), serve as a signal peptide directing secretion. Residues 21-34 (ISLEEGLQLFEGER) constitute a propeptide that is removed on maturation. 4 disulfide bridges follow: Cys-36-Cys-52, Cys-43-Cys-57, Cys-51-Cys-67, and Cys-59-Cys-65. Asn-71 carries the post-translational modification Asparagine amide.

It belongs to the neurotoxin 07 (Beta/delta-agtx) family. 03 (aga-4) subfamily. Aga sub-subfamily. In terms of tissue distribution, expressed by the venom gland.

Its subcellular location is the secreted. Its function is as follows. Insecticidal neurotoxin that induces an irreversible spastic paralysis when injected into insects. Modifies presynaptic voltage-gated sodium channels (Nav), causing them to open at the normal resting potential of the nerve. This leads to spontaneous release of neurotransmitter and repetitive action potentials in motor neurons. In Agelena orientalis (Funnel-web spider), this protein is U3-agatoxin-Ao1e.